The sequence spans 368 residues: Flagellar P-ring protein (368 aa).

The first 24 residues, 1 to 24 (MNSIFRKIVFAAFLLLALPQFALA), serve as a signal peptide directing secretion.

The protein belongs to the FlgI family. The basal body constitutes a major portion of the flagellar organelle and consists of four rings (L,P,S, and M) mounted on a central rod.

The protein localises to the periplasm. The protein resides in the bacterial flagellum basal body. In terms of biological role, assembles around the rod to form the L-ring and probably protects the motor/basal body from shearing forces during rotation. In Geotalea uraniireducens (strain Rf4) (Geobacter uraniireducens), this protein is Flagellar P-ring protein.